Here is a 1083-residue protein sequence, read N- to C-terminus: RecBCD enzyme subunit RecB (1083 aa).

Positions 1–323 (MKVFDLLGPL…QTLGTNWRSD (323 aa)) constitute a UvrD-like helicase ATP-binding domain. A DNA-binding and helicase activity, interacts with RecC region spans residues 1–704 (MKVFDLLGPL…RGRAPGEAIV (704 aa)). 21-28 (ASAGTGKT) contacts ATP. A UvrD-like helicase C-terminal domain is found at 349-607 (VQARHQGHRL…QIMTVWVSKG (259 aa)). Residues 765 to 1083 (AWKRTSYSGL…LSKLLDAEAP (319 aa)) form a nuclease activity, interacts with RecD and RecA region. Mg(2+) is bound by residues histidine 830, aspartate 962, and aspartate 975. Aspartate 975 functions as the For nuclease activity in the catalytic mechanism.

The protein belongs to the helicase family. UvrD subfamily. In terms of assembly, heterotrimer of RecB, RecC and RecD. All subunits contribute to DNA-binding. Interacts with RecA. Mg(2+) is required as a cofactor.

It catalyses the reaction Exonucleolytic cleavage (in the presence of ATP) in either 5'- to 3'- or 3'- to 5'-direction to yield 5'-phosphooligonucleotides.. It carries out the reaction Couples ATP hydrolysis with the unwinding of duplex DNA by translocating in the 3'-5' direction.. The catalysed reaction is ATP + H2O = ADP + phosphate + H(+). In terms of biological role, a helicase/nuclease that prepares dsDNA breaks (DSB) for recombinational DNA repair. Binds to DSBs and unwinds DNA via a highly rapid and processive ATP-dependent bidirectional helicase activity. Holoenzyme degrades any linearized DNA that is unable to undergo homologous recombination. In the holoenzyme this subunit contributes DNA-dependent ATPase activity, exonuclease activity and 3'-5' helicase activity. Unlike the case in E.coli, suppresses RecA-dependent homologous recombination, is instead required for single-strand annealing pathway repair of DSB. This chain is RecBCD enzyme subunit RecB, found in Mycolicibacterium smegmatis (strain ATCC 700084 / mc(2)155) (Mycobacterium smegmatis).